Here is a 323-residue protein sequence, read N- to C-terminus: Transmembrane protein 171 (323 aa).

The next 4 membrane-spanning stretches (helical) occupy residues 22-42 (IFFLFVFGAVLLCVGVLISIF), 57-77 (MVLKIAGPSCAVMGLGTVILA), 112-132 (LIFGFLFLTSGMLISILGIWV), and 159-179 (FLSLQIMGPLIVLVGLCFFVV). Residues 251–268 (YSSLFNLSRTPTPENQGA) are compositionally biased toward polar residues. Positions 251–323 (YSSLFNLSRT…LGAPSESSPP (73 aa)) are disordered. Low complexity predominate over residues 281 to 290 (SGPGSSSESS).

The protein resides in the membrane. The sequence is that of Transmembrane protein 171 (Tmem171) from Rattus norvegicus (Rat).